The following is a 487-amino-acid chain: N-succinylglutamate 5-semialdehyde dehydrogenase (487 aa).

Residue 221-226 (GSSDTG) participates in NAD(+) binding. Catalysis depends on residues E244 and C278.

This sequence belongs to the aldehyde dehydrogenase family. AstD subfamily.

The catalysed reaction is N-succinyl-L-glutamate 5-semialdehyde + NAD(+) + H2O = N-succinyl-L-glutamate + NADH + 2 H(+). Its pathway is amino-acid degradation; L-arginine degradation via AST pathway; L-glutamate and succinate from L-arginine: step 4/5. Catalyzes the NAD-dependent reduction of succinylglutamate semialdehyde into succinylglutamate. The polypeptide is N-succinylglutamate 5-semialdehyde dehydrogenase (Burkholderia ambifaria (strain ATCC BAA-244 / DSM 16087 / CCUG 44356 / LMG 19182 / AMMD) (Burkholderia cepacia (strain AMMD))).